A 160-amino-acid polypeptide reads, in one-letter code: Putative oxygenase ATEG_00330 (160 aa).

One can recognise an EthD domain in the interval 24–100 (HYFGTALHAK…RNIAADPEFA (77 aa)).

This sequence belongs to the tpcK family.

In terms of biological role, putative oxygenase; part of the gene cluster that mediates the biosynthesis of isoflavipucine. The PKS part of the PKS-NRPS ATEG_00325 probably assembles a triketide from an acetyl starter and two malonyl-CoA extender units. The poly-beta-keto intermediate would then be fused to the leucine unit by the NRPS part. The resulting amide would be liberated from the PKS-NRPS through reductive release of the linear PKS-NRPS product from the enzyme complex. Further steps in isoflapucine synthesis include a cyclization step, an oxidation step, a hydrolysis step involving a trans-amidation, and an additional oxidation step, leading to flavipucine. Formation of isoflavipucine from flavipucine requires an unusual rearrangement. Alternative rearrangement reactions could build up rubrobramide, representing a branching of flavipucine biosynthesis. The enzymes involved in the post-PKS-NRPS steps have not been identified yet, but the putative oxygenases ATEG_003329 and ATEG_00330 encoded by the cluster could play a role. This Aspergillus terreus (strain NIH 2624 / FGSC A1156) protein is Putative oxygenase ATEG_00330.